The sequence spans 211 residues: ATP phosphoribosyltransferase (211 aa).

It belongs to the ATP phosphoribosyltransferase family. Short subfamily. Heteromultimer composed of HisG and HisZ subunits.

The protein resides in the cytoplasm. It carries out the reaction 1-(5-phospho-beta-D-ribosyl)-ATP + diphosphate = 5-phospho-alpha-D-ribose 1-diphosphate + ATP. It participates in amino-acid biosynthesis; L-histidine biosynthesis; L-histidine from 5-phospho-alpha-D-ribose 1-diphosphate: step 1/9. In terms of biological role, catalyzes the condensation of ATP and 5-phosphoribose 1-diphosphate to form N'-(5'-phosphoribosyl)-ATP (PR-ATP). Has a crucial role in the pathway because the rate of histidine biosynthesis seems to be controlled primarily by regulation of HisG enzymatic activity. The protein is ATP phosphoribosyltransferase of Hahella chejuensis (strain KCTC 2396).